The primary structure comprises 468 residues: Nucleoprotein (468 aa).

A disordered region spans residues 1–64 (MSGRNRSRSG…KPKAAPPQNV (64 aa)). Residues 18–33 (FKQESDGSDSESERRN) show a composition bias toward basic and acidic residues. Residues 48–193 (GSAPKPEKPK…AEGRGSRGNS (146 aa)) form an RNA-binding region. In terms of domain architecture, CoV N NTD spans 62-186 (QNVSWFAPLV…GIPKGFYAEG (125 aa)). The RNA site is built by R106, R120, and R162. Residue S165 is modified to Phosphoserine; by host. Disordered regions lie at residues 181–228 (GFYA…PSTE), 373–399 (KDFPPTEPKKDKKKKEETAQDTVIFED), and 419–468 (QTDD…AERS). Low complexity predominate over residues 190-223 (RGNSRSSSRNSSRASSRGNSRASSRGASPGRPAA). The CoV N CTD domain occupies 259 to 376 (TKNEAAANAK…ENLNAYKDFP (118 aa)). Residues 270–373 (LRHKRTAHKG…ILAENLNAYK (104 aa)) are dimerization. Residues 379-390 (EPKKDKKKKEET) are compositionally biased toward basic and acidic residues. The span at 419–436 (QTDDEWLGGDETVYEDED) shows a compositional bias: acidic residues. T451 is subject to Phosphothreonine; by host.

Belongs to the betacoronavirus nucleocapsid protein family. Homooligomer. Both monomeric and oligomeric forms interact with RNA. Interacts with protein M. Interacts with NSP3; this interaction serves to tether the genome to the newly translated replicase-transcriptase complex at a very early stage of infection. In terms of processing, ADP-ribosylated. The ADP-ribosylation is retained in the virion during infection. Phosphorylated on serine and threonine residues.

The protein localises to the virion. It localises to the host endoplasmic reticulum-Golgi intermediate compartment. It is found in the host Golgi apparatus. Packages the positive strand viral genome RNA into a helical ribonucleocapsid (RNP) and plays a fundamental role during virion assembly through its interactions with the viral genome and membrane protein M. Plays an important role in enhancing the efficiency of subgenomic viral RNA transcription as well as viral replication. The chain is Nucleoprotein from Rousettus leschenaultii (Leschenault's rousette).